The primary structure comprises 120 residues: U13-lycotoxin-Ls1a (120 aa).

The signal sequence occupies residues 1–16 (MKTLFVLISILYAVYC). A propeptide spanning residues 17 to 54 (FSSEEDVDSAYLANELEPVEDINSEQYAALEPKEEQER) is cleaved from the precursor. Cystine bridges form between C56/C70, C63/C76, C69/C87, and C78/C85. Positions 56–95 (CADMGQDCKDDCDCCLNIATCNCWFGRYFCSCTFGDYQTC) constitute an Agouti domain.

The protein belongs to the neurotoxin 05 (agouti) family. Post-translationally, contains 6 disulfide bonds. Expressed by the venom gland.

The protein resides in the secreted. This Lycosa singoriensis (Wolf spider) protein is U13-lycotoxin-Ls1a.